We begin with the raw amino-acid sequence, 490 residues long: Recombinase Flp protein (490 aa).

Residues 152–437 enclose the Tyr recombinase Flp-type domain; it reads LGNKINDEIT…VFLSSYARFK (286 aa). Tyr358 functions as the O-(3'-phospho-DNA)-tyrosine intermediate in the catalytic mechanism.

The protein belongs to the 'phage' integrase family.

Functionally, catalyzes the recombination between the large inverted repetitions of the plasmid. The chain is Recombinase Flp protein (R) from Zygosaccharomyces rouxii.